A 437-amino-acid polypeptide reads, in one-letter code: Matrix remodeling-associated protein 8 (437 aa).

The signal sequence occupies residues 1–22; it reads MEQLAKLLLWQLLLQQSSVVYL. At 23–339 the chain is on the extracellular side; sequence YSVPADASNP…PESRIHFFQQ (317 aa). Ig-like V-type domains lie at 32–159 and 167–294; these read PDSV…LDIT and EYWD…VFVT. N-linked (GlcNAc...) asparagine glycosylation is found at N41, N121, N246, and N304. 2 disulfide bridges follow: C54–C139 and C188–C274. The chain crosses the membrane as a helical span at residues 340–360; it reads LGYVLATLLLFVVLLIIVVFI. Over 361–437 the chain is Cytoplasmic; that stretch reads TRKRRQRGYE…DKDFRKEYCK (77 aa).

In terms of assembly, homodimer in cis. Does not appear to form trans-homodimers.

Its subcellular location is the cell membrane. Functionally, transmembrane protein which can modulate activity of various signaling pathways, probably via binding to integrin ITGAV:ITGB3. Mediates heterophilic cell-cell interactions in vitro. The protein is Matrix remodeling-associated protein 8 (MXRA8) of Gallus gallus (Chicken).